Reading from the N-terminus, the 242-residue chain is N-alpha-acetyltransferase 60 (242 aa).

Topologically, residues 1–192 are cytoplasmic; the sequence is MTEVVPSSAL…GGHPPWTILD (192 aa). One can recognise an N-acetyltransferase domain in the interval 13 to 182; sequence VSLRLLCHDD…DGFTYVLYIN (170 aa). Y38 lines the substrate pocket. K79 bears the N6-acetyllysine; by autocatalysis mark. The active site involves Y97. L99 serves as a coordination point for substrate. 101-103 is a binding site for acetyl-CoA; the sequence is LGV. An N6-acetyllysine; by autocatalysis mark is found at K105, K109, and K121. 109–114 provides a ligand contact to acetyl-CoA; sequence KHGIGS. The active site involves H138. Residues N143 and 150–153 each bind acetyl-CoA; that span reads YENR. Residues 162–173 are required for homodimerization; that stretch reads PYYYSIRGVLKD. Substrate is bound at residue Y165. An intramembrane region (helical) is located at residues 193-236; that stretch reads YIQHLGSALANLSPCSIPHRIYRQAHSLLCSFLPWSSISTKGGI. At 237–242 the chain is on the cytoplasmic side; it reads EYSRTM.

It belongs to the acetyltransferase family. NAA60 subfamily. As to quaternary structure, monomer and homodimer; monomer in presence of substrate and homodimer in its absence. Acetylated: autoacetylation is required for optimal acetyltransferase activity.

The protein resides in the golgi apparatus membrane. It carries out the reaction N-terminal L-methionyl-[transmembrane protein] + acetyl-CoA = N-terminal N(alpha)-acetyl-L-methionyl-[transmembrane protein] + CoA + H(+). It catalyses the reaction L-lysyl-[protein] + acetyl-CoA = N(6)-acetyl-L-lysyl-[protein] + CoA + H(+). Functionally, N-alpha-acetyltransferase that specifically mediates the acetylation of N-terminal residues of the transmembrane proteins, with a strong preference for N-termini facing the cytosol. Displays N-terminal acetyltransferase activity towards a range of N-terminal sequences including those starting with Met-Lys, Met-Val, Met-Ala and Met-Met. Required for normal chromosomal segregation during anaphase. May also show histone acetyltransferase activity; such results are however unclear in vivo and would require additional experimental evidences. The polypeptide is N-alpha-acetyltransferase 60 (Naa60) (Mus musculus (Mouse)).